A 342-amino-acid chain; its full sequence is tRNA-specific 2-thiouridylase MnmA (342 aa).

ATP is bound by residues 6–13 (LLSGGVDS) and L32. Catalysis depends on C92, which acts as the Nucleophile. The cysteines at positions 92 and 191 are disulfide-linked. G116 contributes to the ATP binding site. Residues 138–140 (KDQ) form an interaction with tRNA region. The active-site Cysteine persulfide intermediate is C191. An interaction with tRNA region spans residues 293-294 (RY).

Belongs to the MnmA/TRMU family.

It is found in the cytoplasm. It catalyses the reaction S-sulfanyl-L-cysteinyl-[protein] + uridine(34) in tRNA + AH2 + ATP = 2-thiouridine(34) in tRNA + L-cysteinyl-[protein] + A + AMP + diphosphate + H(+). Catalyzes the 2-thiolation of uridine at the wobble position (U34) of tRNA, leading to the formation of s(2)U34. The chain is tRNA-specific 2-thiouridylase MnmA from Helicobacter pylori (strain G27).